A 573-amino-acid chain; its full sequence is Urease subunit alpha 2 (573 aa).

In terms of domain architecture, Urease spans 136–573; that stretch reads GAIDAHVHLI…LPMAQRYFLF (438 aa). Ni(2+)-binding residues include His141, His143, and Lys224. Lys224 bears the N6-carboxylysine mark. Residue His226 participates in substrate binding. 2 residues coordinate Ni(2+): His253 and His279. Catalysis depends on His327, which acts as the Proton donor. Residue Asp367 coordinates Ni(2+).

This sequence belongs to the metallo-dependent hydrolases superfamily. Urease alpha subunit family. As to quaternary structure, may form a heterohexamer of 3 UreC (alpha) and 3 UreAB (gamma/beta) subunits. May also form a heterotrimer of UreA (gamma), UreB (beta) and UreC (alpha) subunits. Three heterotrimers associate to form the active enzyme. Ni cation is required as a cofactor. Post-translationally, carboxylation allows a single lysine to coordinate two nickel ions.

Its subcellular location is the cytoplasm. The catalysed reaction is urea + 2 H2O + H(+) = hydrogencarbonate + 2 NH4(+). It functions in the pathway nitrogen metabolism; urea degradation; CO(2) and NH(3) from urea (urease route): step 1/1. The chain is Urease subunit alpha 2 from Streptomyces avermitilis (strain ATCC 31267 / DSM 46492 / JCM 5070 / NBRC 14893 / NCIMB 12804 / NRRL 8165 / MA-4680).